A 1115-amino-acid polypeptide reads, in one-letter code: Disheveled-associated activator of morphogenesis 2 (1115 aa).

The region spanning 40–416 (GPIPNPEELN…QIVLQDERGV (377 aa)) is the GBD/FH3 domain. Residues 434–515 (MLINENEVKQ…ELVARHNESS (82 aa)) adopt a coiled-coil conformation. 2 disordered regions span residues 510 to 605 (RHNE…SHPL) and 655 to 697 (QEGP…SATG). The 177-residue stretch at 518–694 (PVSSPPPPGG…TEKASRSMVS (177 aa)) folds into the FH1 domain. Over residues 540–583 (LPPPPPPLPFDSCPPPPAPPLPPGGPPIPPGAPPCFSSGPPPSH) the composition is skewed to pro residues. The 448-residue stretch at 595–1042 (KKRIPQPSHP…DERRARMEFM (448 aa)) folds into the FH2 domain. One can recognise a DAD domain in the interval 1065–1095 (EESGEFDDLVSALRSGEVFDKDLSKFKRNRK).

The protein belongs to the formin homology family. As to quaternary structure, interacts with DVL3. Interacts with INF2. In terms of tissue distribution, in early embryogenesis, expression is confined to embryonic ectoderm. Highly dynamic expression in later stages of gastrulation. In early somite stages, detected in posterior node and persists until 9-10 somites have developed when expression is concentrated in the chordoneural hinge. During organogenesis, expressed in the CNS, PNS, liver primordia, limb buds and genital tubercle.

Its function is as follows. Key regulator of the Wnt signaling pathway, which is required for various processes during development, such as dorsal patterning, determination of left/right symmetry or myelination in the central nervous system. Acts downstream of Wnt ligands and upstream of beta-catenin (CTNNB1). Required for canonical Wnt signaling pathway during patterning in the dorsal spinal cord by promoting the aggregation of Disheveled (Dvl) complexes, thereby clustering and formation of Wnt receptor signalosomes and potentiating Wnt activity. During dorsal patterning of the spinal cord, inhibits oligodendrocytes differentiation via interaction with PIP5K1A. Also regulates non-canonical Wnt signaling pathway. Acts downstream of PITX2 in the developing gut and is required for left/right asymmetry within dorsal mesentery: affects mesenchymal condensation by lengthening cadherin-based junctions through WNT5A and non-canonical Wnt signaling, inducing polarized condensation in the left dorsal mesentery necessary to initiate gut rotation. Together with DAAM1, required for myocardial maturation and sarcomere assembly. Is a regulator of actin nucleation and elongation, filopodia formation and podocyte migration. The sequence is that of Disheveled-associated activator of morphogenesis 2 from Mus musculus (Mouse).